We begin with the raw amino-acid sequence, 481 residues long: Wax ester synthase/diacylglycerol acyltransferase 1 (481 aa).

Residues Met1 to Ser185 lie on the Cytoplasmic side of the membrane. Residue His147 is the Proton acceptor of the active site. Residues Met186 to Val206 form a helical membrane-spanning segment. The Lumenal segment spans residues Glu207–Val481.

It in the N-terminal section; belongs to the long-chain O-acyltransferase family. In terms of tissue distribution, expressed in flowers, siliques, top parts of stems, and leaves. Not found in roots, seeds and young seedlings.

The protein localises to the cell membrane. It is found in the endoplasmic reticulum membrane. It carries out the reaction a long chain fatty alcohol + a fatty acyl-CoA = a wax ester + CoA. It catalyses the reaction an acyl-CoA + a 1,2-diacyl-sn-glycerol = a triacyl-sn-glycerol + CoA. It participates in glycerolipid metabolism; triacylglycerol biosynthesis. Its pathway is lipid metabolism. Its function is as follows. Bifunctional wax ester synthase/diacylglycerol acyltransferase. Involved in cuticular wax biosynthesis. Required to reduce leaf water loss, especially during drought. This is Wax ester synthase/diacylglycerol acyltransferase 1 from Arabidopsis thaliana (Mouse-ear cress).